Here is a 229-residue protein sequence, read N- to C-terminus: ATP synthase subunit a (229 aa).

Helical transmembrane passes span 14–34 (LIAITNSSMMMMLAVAVALIL), 68–88 (YFPFVFTLFIFIVFLNILGLF), 98–118 (IVVTLGLSFSIVIGVTLGGLW), 124–144 (FLSILMPAGAPLALAPLLVLI), 157–179 (GVRLAANLSAGHLLFAILAGFGF), and 189–209 (NIFPVLIMVFISLLEAAVAVI).

This sequence belongs to the ATPase A chain family. In terms of assembly, F-type ATPases have 2 components, CF(1) - the catalytic core - and CF(0) - the membrane proton channel. CF(1) has five subunits: alpha(3), beta(3), gamma(1), delta(1), epsilon(1). CF(0) has three main subunits: a, b and c.

It localises to the mitochondrion inner membrane. In terms of biological role, mitochondrial membrane ATP synthase (F(1)F(0) ATP synthase or Complex V) produces ATP from ADP in the presence of a proton gradient across the membrane which is generated by electron transport complexes of the respiratory chain. F-type ATPases consist of two structural domains, F(1) - containing the extramembraneous catalytic core and F(0) - containing the membrane proton channel, linked together by a central stalk and a peripheral stalk. During catalysis, ATP synthesis in the catalytic domain of F(1) is coupled via a rotary mechanism of the central stalk subunits to proton translocation. Key component of the proton channel; it may play a direct role in the translocation of protons across the membrane. In Metridium senile (Brown sea anemone), this protein is ATP synthase subunit a (ATPASE6).